Consider the following 183-residue polypeptide: Translation initiation factor IF-3 (183 aa).

The protein belongs to the IF-3 family. As to quaternary structure, monomer.

It is found in the cytoplasm. In terms of biological role, IF-3 binds to the 30S ribosomal subunit and shifts the equilibrium between 70S ribosomes and their 50S and 30S subunits in favor of the free subunits, thus enhancing the availability of 30S subunits on which protein synthesis initiation begins. This is Translation initiation factor IF-3 from Vibrio cholerae serotype O1 (strain ATCC 39315 / El Tor Inaba N16961).